A 126-amino-acid chain; its full sequence is uncharacterized protein (126 aa).

The chain crosses the membrane as a helical span at residues 55–77 (MLLINSNLVLSGLLLFIDVYRAA).

It localises to the membrane. This is an uncharacterized protein from Dictyostelium discoideum (Social amoeba).